A 257-amino-acid polypeptide reads, in one-letter code: uncharacterized protein (257 aa).

Transmembrane regions (helical) follow at residues 23–43 (VLTDPVSWGLIGSLVVLEGLL), 79–99 (FIFIGLGMLLIKFWWIKVLGA), 131–151 (TFGIFWATVISVELMDLAFSV), 158–178 (FAVSEKVWVLLIGGMLGILMM), 199–219 (AFVLIGIIALKMAGSAFHYEM), and 221–241 (HSVFFIIIIAAFAVTLIIHYI).

This sequence belongs to the TerC family.

Its subcellular location is the cell membrane. This is an uncharacterized protein from Bacillus subtilis (strain 168).